A 498-amino-acid polypeptide reads, in one-letter code: NADPH:adrenodoxin oxidoreductase, mitochondrial (498 aa).

The N-terminal 37 residues, 1-37 (MSTHKAALCKVQILKLFLISARCVRITRFYGVCGLST), are a transit peptide targeting the mitochondrion. 4 residues coordinate FAD: Ala-54, Glu-75, Leu-83, and Val-119. NADP(+) is bound by residues 190–193 (QGNV), 234–235 (RR), and Glu-246. FAD is bound by residues Trp-404 and 411 to 413 (GVI). NADP(+) is bound at residue Gly-411. Residues 469-488 (DSEETRRGETRGKPREKMLD) are compositionally biased toward basic and acidic residues. The interval 469 to 489 (DSEETRRGETRGKPREKMLDV) is disordered.

It belongs to the ferredoxin--NADP reductase type 1 family. Requires FAD as cofactor.

It is found in the mitochondrion inner membrane. The catalysed reaction is 2 reduced [adrenodoxin] + NADP(+) + H(+) = 2 oxidized [adrenodoxin] + NADPH. Its pathway is steroid metabolism; cholesterol metabolism. Its function is as follows. Serves as the first electron transfer protein in all the mitochondrial P450 systems including cholesterol side chain cleavage in all steroidogenic tissues, steroid 11-beta hydroxylation in the adrenal cortex, 25-OH-vitamin D3-24 hydroxylation in the kidney, and sterol C-27 hydroxylation in the liver. This is NADPH:adrenodoxin oxidoreductase, mitochondrial (fdxr) from Salvelinus fontinalis (Brook trout).